Consider the following 439-residue polypeptide: Xylose isomerase (439 aa).

Residues His-101 and Asp-104 contribute to the active site. Residues Glu-232, Glu-268, His-271, Asp-296, Asp-307, Asp-309, and Asp-339 each coordinate Mg(2+).

The protein belongs to the xylose isomerase family. Homotetramer. Mg(2+) is required as a cofactor.

It is found in the cytoplasm. It carries out the reaction alpha-D-xylose = alpha-D-xylulofuranose. In Yersinia enterocolitica serotype O:8 / biotype 1B (strain NCTC 13174 / 8081), this protein is Xylose isomerase.